The chain runs to 300 residues: GTPase Era (300 aa).

In terms of domain architecture, Era-type G spans 5-176 (RSGFVCLIGR…IDVLAAALPP (172 aa)). The interval 13-20 (GRPNTGKS) is G1. 13-20 (GRPNTGKS) serves as a coordination point for GTP. The interval 39–43 (QTTRH) is G2. The segment at 61 to 64 (DTPG) is G3. Residues 61–65 (DTPGL) and 125–128 (TKID) each bind GTP. A G4 region spans residues 125–128 (TKID). A G5 region spans residues 155-157 (VSA). Residues 207–286 (VHDELPHSLA…YLDLHVNVAK (80 aa)) form the KH type-2 domain.

This sequence belongs to the TRAFAC class TrmE-Era-EngA-EngB-Septin-like GTPase superfamily. Era GTPase family. As to quaternary structure, monomer.

It localises to the cell envelope. The protein localises to the secreted. Its subcellular location is the cell wall. Functionally, exhibits GTPase activity. Binds RNA but is probably not involved in ribosome assembly in mycobacteria. This is GTPase Era from Mycobacterium leprae (strain TN).